The primary structure comprises 315 residues: MRVLLAPMEGVLDSLVRELLTEVNDYDLCITEFVRVVDQLLPVKVFHRICPELQNASRTPSGTLVRVQLLGQFPQWLAENAARAVELGFWGVDLNCGCPSKTVNGSGGGATLLKDPELIYQGAKAMREAVPAHLPVSVKVRLGWDSGEKKFEIADAVQQAGATELVVHGRTKEQGYRAEHIDWQAIGEIRQRLNIPVIANGEIWDWQSAQQCMAISGCDAVMIGRGALNIPNLSRVVKYNEPRMPWPEVVALLQKYTRLEKQGDTGLYHVARIKQWLSYLRKEYDEATELFQHVRVLNNSPDIARAIQAIDIEKL.

FMN-binding positions include 7–9 and Gln68; that span reads PME. Cys98 (proton donor) is an active-site residue. FMN is bound by residues Lys139, 200-202, and 224-225; these read NGE and GR.

Belongs to the Dus family. DusC subfamily. The cofactor is FMN.

The enzyme catalyses 5,6-dihydrouridine(16) in tRNA + NADP(+) = uridine(16) in tRNA + NADPH + H(+). The catalysed reaction is 5,6-dihydrouridine(16) in tRNA + NAD(+) = uridine(16) in tRNA + NADH + H(+). Its function is as follows. Catalyzes the synthesis of 5,6-dihydrouridine (D), a modified base found in the D-loop of most tRNAs, via the reduction of the C5-C6 double bond in target uridines. Specifically modifies U16 in tRNAs. The sequence is that of tRNA-dihydrouridine(16) synthase from Shigella flexneri.